The chain runs to 356 residues: UDP-N-acetylglucosamine--N-acetylmuramyl-(pentapeptide) pyrophosphoryl-undecaprenol N-acetylglucosamine transferase (356 aa).

UDP-N-acetyl-alpha-D-glucosamine is bound by residues 12-14 (SGG), Asn120, Arg163, Ser187, and Gln286.

This sequence belongs to the glycosyltransferase 28 family. MurG subfamily.

The protein resides in the cell inner membrane. The enzyme catalyses di-trans,octa-cis-undecaprenyl diphospho-N-acetyl-alpha-D-muramoyl-L-alanyl-D-glutamyl-meso-2,6-diaminopimeloyl-D-alanyl-D-alanine + UDP-N-acetyl-alpha-D-glucosamine = di-trans,octa-cis-undecaprenyl diphospho-[N-acetyl-alpha-D-glucosaminyl-(1-&gt;4)]-N-acetyl-alpha-D-muramoyl-L-alanyl-D-glutamyl-meso-2,6-diaminopimeloyl-D-alanyl-D-alanine + UDP + H(+). The protein operates within cell wall biogenesis; peptidoglycan biosynthesis. Cell wall formation. Catalyzes the transfer of a GlcNAc subunit on undecaprenyl-pyrophosphoryl-MurNAc-pentapeptide (lipid intermediate I) to form undecaprenyl-pyrophosphoryl-MurNAc-(pentapeptide)GlcNAc (lipid intermediate II). The sequence is that of UDP-N-acetylglucosamine--N-acetylmuramyl-(pentapeptide) pyrophosphoryl-undecaprenol N-acetylglucosamine transferase from Pelagibacter ubique (strain HTCC1062).